Reading from the N-terminus, the 103-residue chain is Cell division protein FtsB (103 aa).

The Cytoplasmic portion of the chain corresponds to Met1–Lys3. A helical transmembrane segment spans residues Leu4–Phe21. Topologically, residues Gly22–Arg103 are periplasmic. The stretch at Asn33–Gly62 forms a coiled coil.

It belongs to the FtsB family. In terms of assembly, part of a complex composed of FtsB, FtsL and FtsQ.

The protein localises to the cell inner membrane. In terms of biological role, essential cell division protein. May link together the upstream cell division proteins, which are predominantly cytoplasmic, with the downstream cell division proteins, which are predominantly periplasmic. This is Cell division protein FtsB from Salmonella arizonae (strain ATCC BAA-731 / CDC346-86 / RSK2980).